We begin with the raw amino-acid sequence, 36 residues long: Protein P4 (36 aa).

The chain crosses the membrane as a helical span at residues 13–33; that stretch reads GLQLSLLICACLLAVLIVSFC.

Its subcellular location is the host membrane. This Vitis vinifera (Grape) protein is Protein P4.